Reading from the N-terminus, the 130-residue chain is Small ribosomal subunit protein uS13 (130 aa).

Residues 97 to 116 show a composition bias toward basic residues; the sequence is PVRGQRTKTNARTRRGKRKT. Positions 97–130 are disordered; the sequence is PVRGQRTKTNARTRRGKRKTVGAGKSTSSIKRVK. Over residues 121–130 the composition is skewed to polar residues; it reads KSTSSIKRVK.

Belongs to the universal ribosomal protein uS13 family. Part of the 30S ribosomal subunit. Forms a loose heterodimer with protein S19. Forms two bridges to the 50S subunit in the 70S ribosome.

Its function is as follows. Located at the top of the head of the 30S subunit, it contacts several helices of the 16S rRNA. In the 70S ribosome it contacts the 23S rRNA (bridge B1a) and protein L5 of the 50S subunit (bridge B1b), connecting the 2 subunits; these bridges are implicated in subunit movement. Contacts the tRNAs in the A and P-sites. This Endomicrobium trichonymphae protein is Small ribosomal subunit protein uS13.